Consider the following 110-residue polypeptide: MSELKTVGLFAITALAEIAGCYLPYLWLREGKSIWLLIPGALSLVAFVWLLSLHPTAAGRTYAAYGGVYISMAILWLWTVNGIRPTTWDIVGSVVALIGMAIIMFAPRSV.

The next 4 membrane-spanning stretches (helical) occupy residues 7–27 (VGLF…PYLW), 33–53 (SIWL…LLSL), 63–83 (AAYG…VNGI), and 87–107 (TWDI…MFAP).

The protein belongs to the UPF0060 family.

The protein localises to the cell inner membrane. This is UPF0060 membrane protein Psyc_0916 from Psychrobacter arcticus (strain DSM 17307 / VKM B-2377 / 273-4).